The chain runs to 506 residues: Maturase K (506 aa).

The protein belongs to the intron maturase 2 family. MatK subfamily.

It localises to the plastid. The protein localises to the chloroplast. In terms of biological role, usually encoded in the trnK tRNA gene intron. Probably assists in splicing its own and other chloroplast group II introns. This Manihot esculenta (Cassava) protein is Maturase K.